Consider the following 783-residue polypeptide: Polyribonucleotide nucleotidyltransferase 1, mitochondrial (783 aa).

The N-terminal 45 residues, 1–45 (MAACRYCCSCLRLRPLSDGPFLLPRRDRALTQLQVRALWSSAGSR), are a transit peptide targeting the mitochondrion. An N6-acetyllysine mark is found at K250, K264, K285, and K289. K552 is subject to N6-succinyllysine. In terms of domain architecture, KH spans 605–664 (PVVETVQVPLSKRAKFVGPGGYNLKKLQAETGVTISQVDEETFSVFAPTPSAMHEARDFI). Residues 679–750 (GAVYTATITE…ADGRMRLSRK (72 aa)) form the S1 motif domain. 2 positions are modified to phosphoserine: S754 and S782.

This sequence belongs to the polyribonucleotide nucleotidyltransferase family. As to quaternary structure, homotrimer; in free form. Homooligomer. Component of the mitochondrial degradosome (mtEXO) complex which is a heteropentamer containing 2 copies of SUPV3L1 and 3 copies of PNPT1. As part of the mitochondrial degradosome complex, interacts with GRSF1 in an RNA-dependent manner; the interaction enhances the activity of the complex. Interacts with TCL1A; the interaction has no effect on PNPT1 exonuclease activity.

It localises to the cytoplasm. Its subcellular location is the mitochondrion matrix. It is found in the mitochondrion intermembrane space. The enzyme catalyses RNA(n+1) + phosphate = RNA(n) + a ribonucleoside 5'-diphosphate. In terms of biological role, RNA-binding protein implicated in numerous RNA metabolic processes. Catalyzes the phosphorolysis of single-stranded polyribonucleotides processively in the 3'-to-5' direction. Mitochondrial intermembrane factor with RNA-processing exoribonulease activity. Component of the mitochondrial degradosome (mtEXO) complex, that degrades 3' overhang double-stranded RNA with a 3'-to-5' directionality in an ATP-dependent manner. Involved in the degradation of non-coding mitochondrial transcripts (MT-ncRNA) and tRNA-like molecules. Required for correct processing and polyadenylation of mitochondrial mRNAs. Plays a role as a cytoplasmic RNA import factor that mediates the translocation of small RNA components, like the 5S RNA, the RNA subunit of ribonuclease P and the mitochondrial RNA-processing (MRP) RNA, into the mitochondrial matrix. Plays a role in mitochondrial morphogenesis and respiration; regulates the expression of the electron transport chain (ETC) components at the mRNA and protein levels. In the cytoplasm, shows a 3'-to-5' exoribonuclease mediating mRNA degradation activity; degrades c-myc mRNA upon treatment with IFNB1/IFN-beta, resulting in a growth arrest in melanoma cells. Regulates the stability of specific mature miRNAs in melanoma cells; specifically and selectively degrades miR-221, preferentially. Also plays a role in RNA cell surveillance by cleaning up oxidized RNAs. Binds to the RNA subunit of ribonuclease P, MRP RNA and miR-221 microRNA. This Homo sapiens (Human) protein is Polyribonucleotide nucleotidyltransferase 1, mitochondrial.